A 787-amino-acid chain; its full sequence is Endonuclease MutS2 (787 aa).

ATP is bound at residue 331 to 338 (GPNTGGKT). One can recognise a Smr domain in the interval 711-786 (IDVRGKTSDD…EQGVTIVELR (76 aa)).

The protein belongs to the DNA mismatch repair MutS family. MutS2 subfamily. Homodimer. Binds to stalled ribosomes, contacting rRNA.

Its function is as follows. Endonuclease that is involved in the suppression of homologous recombination and thus may have a key role in the control of bacterial genetic diversity. Acts as a ribosome collision sensor, splitting the ribosome into its 2 subunits. Detects stalled/collided 70S ribosomes which it binds and splits by an ATP-hydrolysis driven conformational change. Acts upstream of the ribosome quality control system (RQC), a ribosome-associated complex that mediates the extraction of incompletely synthesized nascent chains from stalled ribosomes and their subsequent degradation. Probably generates substrates for RQC. In Caldicellulosiruptor saccharolyticus (strain ATCC 43494 / DSM 8903 / Tp8T 6331), this protein is Endonuclease MutS2.